We begin with the raw amino-acid sequence, 535 residues long: Zinc transporter ZIP5 (535 aa).

Residues Met-1–Gly-19 form the signal peptide. The Extracellular portion of the chain corresponds to Trp-20–Ala-210. N-linked (GlcNAc...) asparagine glycosylation is found at Asn-49 and Asn-158. The helical transmembrane segment at Leu-211 to Leu-231 threads the bilayer. Topologically, residues Leu-232–Pro-242 are cytoplasmic. Residues Val-243–Leu-263 form a helical membrane-spanning segment. Residues Leu-264–Pro-285 lie on the Extracellular side of the membrane. The helical transmembrane segment at Gly-286–Val-306 threads the bilayer. At Arg-307–Lys-439 the chain is on the cytoplasmic side. A disordered region spans residues Cys-316 to His-373. Ser-333 bears the Phosphoserine mark. At His-371 the chain carries Pros-methylhistidine. A helical transmembrane segment spans residues Leu-440–Gly-460. At Leu-461–Pro-465 the chain is on the extracellular side. A helical transmembrane segment spans residues Val-466–Val-486. Residues Asp-487–His-503 are Cytoplasmic-facing. A helical transmembrane segment spans residues Val-504–Leu-524. The Extracellular portion of the chain corresponds to Glu-525–Gly-535.

This sequence belongs to the ZIP transporter (TC 2.A.5) family. Homodimer. N-Glycosylated. In terms of processing, methylated at His-371 by METTL9. In terms of tissue distribution, expressed in all stages of eye development and primarily in the sclera and several layers of the retina, including the inner segment, outer plexiform layer and ganglion cell layer. Expressed in pancreas, kidney and the proximal and distal small intestine as well as in the embryonic visceral yolk sac. In the proximal intestine, expression is predominant in the crypts but diminishes toward the apical regions of the villi.

The protein resides in the basolateral cell membrane. The catalysed reaction is Zn(2+)(in) = Zn(2+)(out). Uniporter that transports zinc(2+) into polarized cells of enterocytes, pancreatic acinar and endoderm cells across the basolateral membrane and participates, notably, in zinc excretion from the intestine by the uptake of zinc from the blood into the intestine. The transport mechanism is temperature- and concentration-dependent and saturable. In addition, is also a high affinity copper transporter in vitro. Also may regulate glucose-stimulated insulin secretion (GSIS) in islets primarily through the zinc-activated SIRT1-PPARGC1A axis. Could regulate the BMP/TGF-beta (bone morphogenetic protein/transforming growth factor-beta) signaling pathway and modulates extracellular matrix (ECM) proteins of the sclera. Plays a role in eye development. This is Zinc transporter ZIP5 from Mus musculus (Mouse).